A 158-amino-acid chain; its full sequence is Small ribosomal subunit protein uS9 (158 aa).

Belongs to the universal ribosomal protein uS9 family.

This Brucella melitensis biotype 1 (strain ATCC 23456 / CCUG 17765 / NCTC 10094 / 16M) protein is Small ribosomal subunit protein uS9.